A 368-amino-acid chain; its full sequence is uncharacterized protein (368 aa).

In terms of biological role, might be involved in sporulation. This is an uncharacterized protein from Brachyspira hyodysenteriae (strain ATCC 49526 / WA1).